Here is a 306-residue protein sequence, read N- to C-terminus: Beta-lactamase 1 (306 aa).

The first 43 residues, 1 to 43 (MKNKRMLKIGMCVGILGLSVTSLEAFTGGALQVEAKEKTGQVK), serve as a signal peptide directing secretion. S89 functions as the Acyl-ester intermediate in the catalytic mechanism. The active-site Proton acceptor is E185. Residue 251 to 253 (KSG) coordinates substrate.

It belongs to the class-A beta-lactamase family.

It carries out the reaction a beta-lactam + H2O = a substituted beta-amino acid. Functionally, this protein is a beta-lactamase with a substrate specificity for penicillins. The polypeptide is Beta-lactamase 1 (blaCI) (Bacillus mycoides).